The chain runs to 203 residues: Urease accessory protein UreG (203 aa).

14 to 21 serves as a coordination point for GTP; that stretch reads GPVGSGKT.

This sequence belongs to the SIMIBI class G3E GTPase family. UreG subfamily. As to quaternary structure, homodimer. UreD, UreF and UreG form a complex that acts as a GTP-hydrolysis-dependent molecular chaperone, activating the urease apoprotein by helping to assemble the nickel containing metallocenter of UreC. The UreE protein probably delivers the nickel.

Its subcellular location is the cytoplasm. Its function is as follows. Facilitates the functional incorporation of the urease nickel metallocenter. This process requires GTP hydrolysis, probably effectuated by UreG. The sequence is that of Urease accessory protein UreG from Rhizobium etli (strain CIAT 652).